A 317-amino-acid polypeptide reads, in one-letter code: Transaldolase (317 aa).

Lys132 serves as the catalytic Schiff-base intermediate with substrate.

The protein belongs to the transaldolase family. Type 1 subfamily. As to quaternary structure, homodimer.

The protein resides in the cytoplasm. It catalyses the reaction D-sedoheptulose 7-phosphate + D-glyceraldehyde 3-phosphate = D-erythrose 4-phosphate + beta-D-fructose 6-phosphate. It participates in carbohydrate degradation; pentose phosphate pathway; D-glyceraldehyde 3-phosphate and beta-D-fructose 6-phosphate from D-ribose 5-phosphate and D-xylulose 5-phosphate (non-oxidative stage): step 2/3. In terms of biological role, transaldolase is important for the balance of metabolites in the pentose-phosphate pathway. The polypeptide is Transaldolase (Actinobacillus succinogenes (strain ATCC 55618 / DSM 22257 / CCUG 43843 / 130Z)).